Reading from the N-terminus, the 223-residue chain is NADH-quinone oxidoreductase subunit C (223 aa).

This sequence belongs to the complex I 30 kDa subunit family. As to quaternary structure, NDH-1 is composed of 14 different subunits. Subunits NuoB, C, D, E, F, and G constitute the peripheral sector of the complex.

Its subcellular location is the cell inner membrane. It catalyses the reaction a quinone + NADH + 5 H(+)(in) = a quinol + NAD(+) + 4 H(+)(out). Its function is as follows. NDH-1 shuttles electrons from NADH, via FMN and iron-sulfur (Fe-S) centers, to quinones in the respiratory chain. The immediate electron acceptor for the enzyme in this species is believed to be ubiquinone. Couples the redox reaction to proton translocation (for every two electrons transferred, four hydrogen ions are translocated across the cytoplasmic membrane), and thus conserves the redox energy in a proton gradient. The polypeptide is NADH-quinone oxidoreductase subunit C (Hydrogenovibrio crunogenus (strain DSM 25203 / XCL-2) (Thiomicrospira crunogena)).